We begin with the raw amino-acid sequence, 752 residues long: GTPase-activating protein rrc-1 (752 aa).

An SH3 domain is found at 165-244; the sequence is PAIAAAVVTK…PRDCVMLIDD (80 aa). In terms of domain architecture, Rho-GAP spans 281-463; it reads LELTELFMRT…FCIENSDSLF (183 aa). Disordered stretches follow at residues 523–552 and 582–609; these read STGE…ATFQ and RSMR…GANN.

In terms of biological role, functions as a GTPase-activating protein (GAP) for ced-10/RAC-1 and CDC42. In Caenorhabditis briggsae, this protein is GTPase-activating protein rrc-1.